We begin with the raw amino-acid sequence, 445 residues long: UPF0210 protein LACR_1020 (445 aa).

Belongs to the UPF0210 family. As to quaternary structure, homodimer.

The polypeptide is UPF0210 protein LACR_1020 (Lactococcus lactis subsp. cremoris (strain SK11)).